The following is a 142-amino-acid chain: 3-hydroxyacyl-[acyl-carrier-protein] dehydratase FabZ (142 aa).

Residue H49 is part of the active site.

Belongs to the thioester dehydratase family. FabZ subfamily.

The protein localises to the cytoplasm. The catalysed reaction is a (3R)-hydroxyacyl-[ACP] = a (2E)-enoyl-[ACP] + H2O. Functionally, involved in unsaturated fatty acids biosynthesis. Catalyzes the dehydration of short chain beta-hydroxyacyl-ACPs and long chain saturated and unsaturated beta-hydroxyacyl-ACPs. This is 3-hydroxyacyl-[acyl-carrier-protein] dehydratase FabZ from Clostridium novyi (strain NT).